We begin with the raw amino-acid sequence, 179 residues long: Small hydrophobic protein (179 aa).

Residues 1–29 (MITLDVIKSDGSSKTCTHLKKIIKDHSGK) lie on the Intravirion side of the membrane. Residues 30 to 50 (VLIALKLILALLTFFTITITI) form a helical; Signal-anchor for type II membrane protein membrane-spanning segment. The Virion surface portion of the chain corresponds to 51 to 179 (NYIKVENNLQ…EWKCYHHSID (129 aa)). N76, N121, and N149 each carry an N-linked (GlcNAc...) asparagine; by host glycan.

It belongs to the metapneumovirus small hydrophobic protein family. In terms of assembly, homooligomer. Interacts with glycoprotein G.

The protein resides in the virion membrane. The protein localises to the host cell membrane. Viroporin that forms a ion channel probably displaying low ion selectivity. Plays a role in counteracting host innate immunity by inhibiting TLR7/MyD88/TRAF6 signaling and STAT1 phosphorylation, leading to down-regulation of type-I IFN. The polypeptide is Small hydrophobic protein (SH) (Homo sapiens (Human)).